A 538-amino-acid polypeptide reads, in one-letter code: CTP synthase (538 aa).

The amidoligase domain stretch occupies residues 1–269; the sequence is MSPRKYVIVT…ARLVERRLFG (269 aa). Serine 15 is a CTP binding site. Serine 15 serves as a coordination point for UTP. 16-21 contacts ATP; that stretch reads SVGKGL. An L-glutamine-binding site is contributed by tyrosine 56. Aspartate 73 is an ATP binding site. Aspartate 73 and glutamate 143 together coordinate Mg(2+). CTP-binding positions include 150-152, 190-195, and lysine 226; these read DIE and KTKPVQ. UTP contacts are provided by residues 190-195 and lysine 226; that span reads KTKPVQ. The Glutamine amidotransferase type-1 domain occupies 294 to 538; the sequence is KVAMVGKYTK…FVTAVARLRG (245 aa). L-glutamine is bound at residue glycine 358. Residue cysteine 385 is the Nucleophile; for glutamine hydrolysis of the active site. L-glutamine contacts are provided by residues 386–389, glutamate 409, and arginine 466; that span reads FGMQ. Active-site residues include histidine 512 and glutamate 514.

This sequence belongs to the CTP synthase family. As to quaternary structure, homotetramer.

The catalysed reaction is UTP + L-glutamine + ATP + H2O = CTP + L-glutamate + ADP + phosphate + 2 H(+). It catalyses the reaction L-glutamine + H2O = L-glutamate + NH4(+). It carries out the reaction UTP + NH4(+) + ATP = CTP + ADP + phosphate + 2 H(+). It participates in pyrimidine metabolism; CTP biosynthesis via de novo pathway; CTP from UDP: step 2/2. Its activity is regulated as follows. Allosterically activated by GTP, when glutamine is the substrate; GTP has no effect on the reaction when ammonia is the substrate. The allosteric effector GTP functions by stabilizing the protein conformation that binds the tetrahedral intermediate(s) formed during glutamine hydrolysis. Inhibited by the product CTP, via allosteric rather than competitive inhibition. Catalyzes the ATP-dependent amination of UTP to CTP with either L-glutamine or ammonia as the source of nitrogen. Regulates intracellular CTP levels through interactions with the four ribonucleotide triphosphates. This is CTP synthase from Aeropyrum pernix (strain ATCC 700893 / DSM 11879 / JCM 9820 / NBRC 100138 / K1).